The chain runs to 508 residues: Protein adenylyltransferase fic-1 (508 aa).

Residues 44–64 (TVIIISVLVSLICQHFVPYAV) traverse the membrane as a helical segment. 2 TPR repeats span residues 147-180 (AILAAKAAGRSRKDGNLERAMTIMEHAMALAPTN) and 181-214 (PQILIEMGQIREMHNELVEADQCYVKALAYDPGN). Residues 270–275 (TVAIEG) carry the Inhibitory (S/T)XXXE(G/N) motif motif. Residue E274 coordinates ATP. Positions 326 to 461 (ISIDDILEMH…LRPFVRYVAK (136 aa)) constitute a Fido domain. Position 352 is an O-AMP-threonine; by autocatalysis (T352). ATP is bound at residue 357–360 (VGRF). H404 is an active-site residue. ATP contacts are provided by residues 408 to 415 (DGNGRTAR), 440 to 441 (YY), and N448. At T476 the chain carries O-AMP-threonine; by autocatalysis. The segment at 482 to 508 (LNSGDSKLTPEESEVSEKIEAECRAGN) is disordered. A compositionally biased stretch (basic and acidic residues) spans 496-508 (VSEKIEAECRAGN).

It belongs to the fic family. As to quaternary structure, forms homodimers; homodimerization might be required for adenylyltransferase activity. As to expression, ubiquitously expressed, with high expression in the germline.

It is found in the endoplasmic reticulum membrane. Its subcellular location is the nucleus membrane. The enzyme catalyses L-tyrosyl-[protein] + ATP = O-(5'-adenylyl)-L-tyrosyl-[protein] + diphosphate. It catalyses the reaction L-threonyl-[protein] + ATP = 3-O-(5'-adenylyl)-L-threonyl-[protein] + diphosphate. It carries out the reaction 3-O-(5'-adenylyl)-L-threonyl-[protein] + H2O = L-threonyl-[protein] + AMP + H(+). With respect to regulation, the side chain of Glu-274 determines which of the two opposing activities (AMPylase or de-AMPylase) will take place. In response to endoplasmic reticulum stress, mediates de-AMPylase activity. Adenylyltransferase activity is inhibited by the inhibitory helix present at the N-terminus: Glu-274 binds ATP and competes with ATP-binding at Arg-415, thereby preventing adenylyltransferase activity. In unstressed cells, disengagement of Glu-274 promotes adenylyltransferase activity. Activation dissociates ATP-binding from Glu-274, allowing ordered binding of the entire ATP moiety with the alpha-phosphate in an orientation that is productive for accepting an incoming target hydroxyl side chain. Protein that can both mediate the addition of adenosine 5'-monophosphate (AMP) to specific residues of target proteins (AMPylation), and the removal of the same modification from target proteins (de-AMPylation), depending on the context. The side chain of Glu-274 determines which of the two opposing activities (AMPylase or de-AMPylase) will take place. Adenylyltransferase that mediates the addition of adenosine 5'-monophosphate (AMP) to specific residues of target proteins. In vivo target proteins include the heat-shock 70 family proteins hsp-1 and hsp-3 and the translation elongation factors eef-1A, eef-1G and eef-2. Can AMPylate core histone H3 in vitro. Can also act as a phosphodiesterase by mediating removal of ATP (de-AMPylation) from target proteins. Decreases susceptibility to P.aeruginosa-mediated killing and might therefore play a role in the innate immune response. This Caenorhabditis elegans protein is Protein adenylyltransferase fic-1.